Consider the following 1072-residue polypeptide: 5'-3' exoribonuclease 2 (1072 aa).

Residues 118-144 are a coiled coil; that stretch reads RRFRAAREAMEKEEDKQKFVELLKKQN. Residues 269 to 286 form a CCHC-type zinc finger; it reads RLCKICGQKGHDAMNCKG. A compositionally biased stretch (basic and acidic residues) spans 414 to 435; it reads KETEDRREAGFKRRKLADEARQ. Disordered regions lie at residues 414–459, 509–577, 865–911, and 943–1072; these read KETE…GFSF, QGTS…AEPT, ASRS…GGGG, and GGGY…RGYR. Residues 518–543 show a composition bias toward low complexity; it reads AESTETPAETAAAAPATEEQAAPPAA. A compositionally biased stretch (gly residues) spans 892–911; sequence GPGGGQQGGRGRGGYQGGGG. Residues 955-967 are compositionally biased toward pro residues; sequence GPPPGWQPPPPPG. Composition is skewed to gly residues over residues 983–1000, 1025–1036, and 1056–1072; these read AYGG…GSSR, YGQGGSRGGYQG, and GYRG…RGYR.

This sequence belongs to the 5'-3' exonuclease family. XRN2/RAT1 subfamily. As to quaternary structure, interacts with rai1; the interaction is direct, stabilizes exr-1 protein structure and may stimulate its exoribonuclease activity. The interaction also stimulates rai1 pyrophosphohydrolase activity, probably by recruiting it to mRNA substrates.

It localises to the nucleus. Functionally, possesses 5'-&gt;3' exoribonuclease activity. Required for the processing of nuclear mRNA and rRNA precursors. May promote the termination of transcription by RNA polymerase II. Essential for vegetative cell growth and chromosome segregation. The protein is 5'-3' exoribonuclease 2 (exr-1) of Neurospora crassa (strain ATCC 24698 / 74-OR23-1A / CBS 708.71 / DSM 1257 / FGSC 987).